A 44-amino-acid polypeptide reads, in one-letter code: U17-ctenitoxin-Co1a (44 aa).

Intrachain disulfides connect C3–C20, C10–C26, C19–C40, and C28–C38.

In terms of tissue distribution, expressed by the venom gland.

Its subcellular location is the secreted. Omega-agatoxins are antagonists of voltage-sensitive calcium channels (Cav). Toxic to mice by intracerebroventricular injection. The polypeptide is U17-ctenitoxin-Co1a (Ctenus ornatus (Brazilian spider)).